A 281-amino-acid chain; its full sequence is Proline iminopeptidase PfmaB (281 aa).

Residues 23-267 (PLVITLHGGR…NANHSVHVEK (245 aa)) form the AB hydrolase-1 domain.

The protein belongs to the peptidase S33 family.

The enzyme catalyses Release of N-terminal proline from a peptide.. Proline iminopeptidase; part of the gene cluster that mediates the biosynthesis of dihydroxynaphthalene (DHN)-melanin, a bluish-green pigment forming a dark layer in the conidial wall that protects the conidia from UV radiations. The first step of the pathway is the production of the pentaketide 1,3,6,8-tetrahydroxynaphthalene (1,3,6,8-THN or T4HN) by the polyketide synthase PfmaE though condensation of acetyl-CoA with malonyl-CoA. T4HN is not stable and easily oxidizes into the stable form flaviolin. T4HN is also substrate of the hydroxynaphthalene reductase PfmaG to yield scytalone. The scytalone dehydratase PfmaJ then reduces scytalone to 1,3,8-THN. 1,3,8-THN is then substrate of the hydroxynaphthalene reductase PfmaI to yield vermelone. Vermelone is further converted by the multicopper oxidase PfmaD to 1,8-DHN. Finally the laccase PFICI_06862 transforms 1,8-DHN to DHN-melanin. The roles of the 5-oxoprolinase PfmaA and the proline iminopeptidase PfmaB within the cluster have not been elucidated yet. The polypeptide is Proline iminopeptidase PfmaB (Pestalotiopsis fici (strain W106-1 / CGMCC3.15140)).